The chain runs to 271 residues: 3-methyl-2-oxobutanoate hydroxymethyltransferase (271 aa).

Mg(2+) contacts are provided by D42 and D86. Residues 42–43 (DS), D86, and K116 each bind 3-methyl-2-oxobutanoate. Residue E118 coordinates Mg(2+). The active-site Proton acceptor is the E185.

The protein belongs to the PanB family. As to quaternary structure, homodecamer; pentamer of dimers. The cofactor is Mg(2+).

It is found in the cytoplasm. It catalyses the reaction 3-methyl-2-oxobutanoate + (6R)-5,10-methylene-5,6,7,8-tetrahydrofolate + H2O = 2-dehydropantoate + (6S)-5,6,7,8-tetrahydrofolate. It functions in the pathway cofactor biosynthesis; (R)-pantothenate biosynthesis; (R)-pantoate from 3-methyl-2-oxobutanoate: step 1/2. Functionally, catalyzes the reversible reaction in which hydroxymethyl group from 5,10-methylenetetrahydrofolate is transferred onto alpha-ketoisovalerate to form ketopantoate. The chain is 3-methyl-2-oxobutanoate hydroxymethyltransferase from Synechococcus sp. (strain CC9605).